The primary structure comprises 422 residues: Synaptotagmin-1 (422 aa).

Residues 1-57 (MVSESHHEALAAPPVTTVATVLPSNATEPASPGEGKEDAFSKLKEKFMNELHKIPLP) are Vesicular-facing. The N-linked (GlcNAc...) asparagine glycan is linked to asparagine 25. Residues 58-80 (PWALIAIAIVAVLLVLTCCFCIC) traverse the membrane as a helical segment. 5 S-palmitoyl cysteine lipidation sites follow: cysteine 75, cysteine 76, cysteine 78, cysteine 80, and cysteine 83. At 81 to 422 (KKCLFKKKNK…EVDAMLAVKK (342 aa)) the chain is on the cytoplasmic side. Residues 113-142 (TMKDQALKDDDAETGLTDGEEKEEPKEEEK) are disordered. Residues 122-134 (DDAETGLTDGEEK) show a composition bias toward acidic residues. A Phosphothreonine modification is found at threonine 129. The phospholipid binding stretch occupies residues 136–382 (EPKEEEKLGK…AIGKVFVGYN (247 aa)). The C2 1 domain occupies 142–261 (KLGKLQYSLD…DFGHVTEEWR (120 aa)). The Ca(2+) site is built by leucine 172, aspartate 173, and aspartate 179. Tyrosine 230 is subject to Phosphotyrosine. The Ca(2+) site is built by aspartate 231, phenylalanine 232, aspartate 233, serine 236, lysine 237, and aspartate 239. At serine 265 the chain carries Phosphoserine. In terms of domain architecture, C2 2 spans 273-406 (KLGDICFSLR…NPRRPIAQWH (134 aa)). 2 residues coordinate Ca(2+): aspartate 304 and aspartate 310. Phosphoserine occurs at positions 343 and 345. Residues aspartate 364, aspartate 366, and aspartate 372 each contribute to the Ca(2+) site.

This sequence belongs to the synaptotagmin family. As to quaternary structure, homotetramer. Heterodimer; heterodimerizes with SYT2 in presence of calcium. Interacts with SCAMP5. Interacts with STON2. Forms a complex with SV2B, syntaxin 1 and SNAP25. Interacts with SV2A, SV2B and SV2C. Interacts with RIMS1. Interacts with PRRT2. Interacts with DNAJC5 in a phosphorylation-dependent manner. Interacts (via N-terminus) with RAB3A. Interacts with SYT12. Interacts with calmodulin. Interacts with DNM1 (via C-terminal proline-rich domain (PRD)); this interaction facilitates vesicle fission during clathrin-mediated endocytosis (CME). Requires Ca(2+) as cofactor. Glycosylated. Expressed in melanocytes.

It is found in the cytoplasmic vesicle. It localises to the secretory vesicle membrane. Its subcellular location is the secretory vesicle. The protein resides in the synaptic vesicle membrane. The protein localises to the chromaffin granule membrane. It is found in the cytoplasm. In terms of biological role, calcium sensor that participates in triggering neurotransmitter release at the synapse. May have a regulatory role in the membrane interactions during trafficking of synaptic vesicles at the active zone of the synapse. It binds acidic phospholipids with a specificity that requires the presence of both an acidic head group and a diacyl backbone. A Ca(2+)-dependent interaction between synaptotagmin and putative receptors for activated protein kinase C has also been reported. It can bind to at least three additional proteins in a Ca(2+)-independent manner; these are neurexins, syntaxin and AP2. Plays a role in dendrite formation by melanocytes. This is Synaptotagmin-1 from Homo sapiens (Human).